The chain runs to 233 residues: Glyceraldehyde 3-phosphate phosphatase (233 aa).

Belongs to the HAD-like hydrolase superfamily. It depends on Mg(2+) as a cofactor.

In terms of biological role, catalyzes the dephosphorylation of D,L-glyceraldehyde 3-phosphate in vitro. The polypeptide is Glyceraldehyde 3-phosphate phosphatase (Methanopyrus kandleri (strain AV19 / DSM 6324 / JCM 9639 / NBRC 100938)).